A 217-amino-acid polypeptide reads, in one-letter code: 3-demethoxyubiquinol 3-hydroxylase (217 aa).

Residues E66, E96, H99, E148, E180, and H183 each contribute to the Fe cation site.

Belongs to the COQ7 family. Fe cation serves as cofactor.

The protein resides in the cell membrane. It carries out the reaction a 5-methoxy-2-methyl-3-(all-trans-polyprenyl)benzene-1,4-diol + AH2 + O2 = a 3-demethylubiquinol + A + H2O. It functions in the pathway cofactor biosynthesis; ubiquinone biosynthesis. Functionally, catalyzes the hydroxylation of 2-nonaprenyl-3-methyl-6-methoxy-1,4-benzoquinol during ubiquinone biosynthesis. The chain is 3-demethoxyubiquinol 3-hydroxylase from Ralstonia pickettii (strain 12J).